A 103-amino-acid polypeptide reads, in one-letter code: Potassium voltage-gated channel subfamily E member 3 (103 aa).

Asn-5, Asn-22, and Asn-41 each carry an N-linked (GlcNAc...) asparagine glycan. The disordered stretch occupies residues 30-52; sequence LCRPGPGPGPDNQTEDRRASLPG. Residues 57-77 form a helical membrane-spanning segment; that stretch reads SYMYILFVMFLFAVTVGSLIL. Residues 68–79 form an interaction with KCNQ1 region; it reads FAVTVGSLILGY. Residues 78–103 are Cytoplasmic-facing; that stretch reads GYTRSRKVDKRSDPYHVYIKNRVSMI.

It belongs to the potassium channel KCNE family. As to quaternary structure, interacts with KCNB1. Interacts with KCNC2. Associates with KCNC4/Kv3.4. Interacts with KCNQ1; associates with a KCNQ1:KCNE3 stoichiometry of 4:4; produces a current with nearly instantaneous activation with a linear current-voltage relationship and alters membrane raft localization; affects KCNQ1 structure and gating properties.

Its subcellular location is the cell membrane. It is found in the cytoplasm. It localises to the perikaryon. The protein resides in the cell projection. The protein localises to the dendrite. Its subcellular location is the membrane raft. Its function is as follows. Ancillary protein that functions as a regulatory subunit of the voltage-gated potassium (Kv) channel complex composed of pore-forming and potassium-conducting alpha subunits and of regulatory beta subunits. KCNE3 beta subunit modulates the gating kinetics and enhances stability of the channel complex. Alters the gating of the delayed rectifier Kv channel containing KCNB1 alpha subunit. Associates with KCNC4/Kv3.4 alpha subunit to form the subthreshold Kv channel in skeletal muscle and to establish the resting membrane potential (RMP) in muscle cells. Association with KCNQ1/KCLQT1 alpha subunit may form the intestinal cAMP-stimulated potassium channel involved in chloride secretion that produces a current with nearly instantaneous activation with a linear current-voltage relationship. This is Potassium voltage-gated channel subfamily E member 3 from Mus musculus (Mouse).